A 202-amino-acid chain; its full sequence is Putative pituitary tumor-transforming gene 3 protein (202 aa).

Positions 61 to 64 (RKAL) match the D-box motif. The segment at 67-92 (VNRATEKSVKTNGPLKQKQPSFSAKK) is disordered. The SH3-binding signature appears at 163–173 (PPLPLKMPSPP).

This sequence belongs to the securin family.

Its subcellular location is the cytoplasm. The protein resides in the nucleus. This Pongo pygmaeus (Bornean orangutan) protein is Putative pituitary tumor-transforming gene 3 protein (PTTG3).